The following is a 78-amino-acid chain: Translational regulator CsrA (78 aa).

The protein belongs to the CsrA/RsmA family. In terms of assembly, homodimer; the beta-strands of each monomer intercalate to form a hydrophobic core, while the alpha-helices form wings that extend away from the core.

The protein localises to the cytoplasm. A translational regulator that binds mRNA to regulate translation initiation and/or mRNA stability. Usually binds in the 5'-UTR at or near the Shine-Dalgarno sequence preventing ribosome-binding, thus repressing translation. Its main target seems to be the major flagellin gene, while its function is anatagonized by FliW. The polypeptide is Translational regulator CsrA (Desulfotalea psychrophila (strain LSv54 / DSM 12343)).